Consider the following 332-residue polypeptide: Large ribosomal subunit protein uL29m (332 aa).

The segment at 19 to 40 is disordered; it reads RFTKPKPKPAKRENVRLPTQRT. Residues 264-327 adopt a coiled-coil conformation; the sequence is TSENTESAIA…IQLQEEDAKN (64 aa).

It belongs to the universal ribosomal protein uL29 family. In terms of assembly, component of the mitochondrial large ribosomal subunit. Mature mitochondrial ribosomes consist of a small (37S) and a large (54S) subunit. The 37S subunit contains at least 33 different proteins and 1 molecule of RNA (15S). The 54S subunit contains at least 45 different proteins and 1 molecule of RNA (21S).

The protein localises to the mitochondrion. This chain is Large ribosomal subunit protein uL29m (MRPL4), found in Kluyveromyces lactis (strain ATCC 8585 / CBS 2359 / DSM 70799 / NBRC 1267 / NRRL Y-1140 / WM37) (Yeast).